The chain runs to 145 residues: Mitochondrial import receptor subunit TOM20 homolog (145 aa).

Topologically, residues methionine 1–serine 6 are mitochondrial intermembrane. Residues alanine 7–phenylalanine 24 form a helical membrane-spanning segment. Topologically, residues aspartate 25–glutamate 145 are cytoplasmic. Glycyl lysine isopeptide (Lys-Gly) (interchain with G-Cter in ubiquitin) cross-links involve residues lysine 35, lysine 56, lysine 61, and lysine 68. Serine 135 and serine 138 each carry phosphoserine.

It belongs to the Tom20 family. In terms of assembly, forms part of the preprotein translocase complex of the outer mitochondrial membrane (TOM complex) which consists of at least 7 different proteins (TOMM5, TOMM6, TOMM7, TOMM20, TOMM22, TOMM40 and TOMM70). Interacts with TOM22. Interacts with APEX1. Interacts with TBC1D21. Upon mitochondrial depolarization, interacts with PINK1; the interaction is required for PINK1-TOM-TIM23 supercomplex formation which is critical for PINK1 stabilization at the outer mitochondrial membrane, kinase activation and downstream mitophagy. In terms of processing, ubiquitinated by PRKN during mitophagy, leading to its degradation and enhancement of mitophagy. Deubiquitinated by USP30.

Its subcellular location is the mitochondrion outer membrane. Its function is as follows. Central component of the receptor complex responsible for the recognition and translocation of cytosolically synthesized mitochondrial preproteins. Together with TOM22 functions as the transit peptide receptor at the surface of the mitochondrion outer membrane and facilitates the movement of preproteins into the TOM40 translocation pore. Required for the translocation across the mitochondrial outer membrane of cytochrome P450 monooxygenases. The sequence is that of Mitochondrial import receptor subunit TOM20 homolog (TOMM20) from Bos taurus (Bovine).